A 156-amino-acid chain; its full sequence is Movement protein P17 (156 aa).

Residues 38–54 (AEDAEEEAIAAQEELEF) form a homodimerization region. 2 disordered regions span residues 55 to 80 (PEDE…EVSP) and 106 to 156 (ASYF…IKRG). The segment at 57–156 (DEAQARHSCL…RAAPKLIKRG (100 aa)) is RNA-binding. Phosphoserine is present on residues Ser71, Ser79, Ser137, and Ser140. Basic residues predominate over residues 144 to 156 (KLRRAAPKLIKRG).

Belongs to the polerovirus movement protein family. In terms of assembly, homodimer. Expressed as a nonphosphorylated 20kDa form and a phosphorylated 22kDa form. Phosphorylated by a host PKC-related kinase. Serine phosphorylation is required for plamodesma targeting.

Its subcellular location is the host cell junction. It localises to the host plasmodesma. It is found in the host chloroplast envelope. The protein resides in the host Golgi apparatus. The protein localises to the host mitochondrion outer membrane. In terms of biological role, together with movement protein P3a, facilitates long-distance movement of virions in host. Transports viral genome to neighboring plant cells directly through plasmosdesmata, without any budding. The movement protein allows efficient cell to cell propagation, by bypassing the host cell wall barrier. Binds ssRNA. The protein is Movement protein P17 of Potato leafroll virus (strain Potato/Canada/Rowhani/1979) (PLrV).